Here is a 498-residue protein sequence, read N- to C-terminus: Glycerol kinase (498 aa).

ADP is bound at residue threonine 12. ATP is bound by residues threonine 12, threonine 13, and serine 14. Residue threonine 12 coordinates sn-glycerol 3-phosphate. Arginine 16 is a binding site for ADP. Sn-glycerol 3-phosphate-binding residues include arginine 82, glutamate 83, tyrosine 134, and aspartate 244. Glycerol contacts are provided by arginine 82, glutamate 83, tyrosine 134, aspartate 244, and glutamine 245. Residues threonine 266 and glycine 310 each coordinate ADP. The ATP site is built by threonine 266, glycine 310, glutamine 314, and glycine 411. Glycine 411 and asparagine 415 together coordinate ADP.

The protein belongs to the FGGY kinase family.

It catalyses the reaction glycerol + ATP = sn-glycerol 3-phosphate + ADP + H(+). It participates in polyol metabolism; glycerol degradation via glycerol kinase pathway; sn-glycerol 3-phosphate from glycerol: step 1/1. Its activity is regulated as follows. Inhibited by fructose 1,6-bisphosphate (FBP). Key enzyme in the regulation of glycerol uptake and metabolism. Catalyzes the phosphorylation of glycerol to yield sn-glycerol 3-phosphate. The polypeptide is Glycerol kinase (Chloroflexus aurantiacus (strain ATCC 29364 / DSM 637 / Y-400-fl)).